Here is a 187-residue protein sequence, read N- to C-terminus: Biogenesis of lysosome-related organelles complex 1 subunit 5 (187 aa).

The tract at residues 1–26 (MSGGGTETPVGCEAAPGGGSKKRDSL) is disordered. S2 bears the N-acetylserine mark. Positions 154 to 186 (NKRAEVDEEHRKAMERLKEQYAEMEKDLAKFST) form a coiled coil.

The protein belongs to the BLOC1S5 family. In terms of assembly, interacts with BLOC1S4, DTNBP1/BLOC1S7 and PI4K2A. Component of the biogenesis of lysosome-related organelles complex 1 (BLOC-1) composed of BLOC1S1, BLOC1S2, BLOC1S3, BLOC1S4, BLOC1S5, BLOC1S6, DTNBP1/BLOC1S7 and SNAPIN/BLOC1S8. Octamer composed of one copy each BLOC1S1, BLOC1S2, BLOC1S3, BLOC1S4, BLOC1S5, BLOC1S6, DTNBP1/BLOC1S7 and SNAPIN/BLOC1S8. The BLOC-1 complex associates with the AP-3 protein complex and membrane protein cargos. Interacts with BLOC1S6.

Component of the BLOC-1 complex, a complex that is required for normal biogenesis of lysosome-related organelles (LRO), such as platelet dense granules and melanosomes. In concert with the AP-3 complex, the BLOC-1 complex is required to target membrane protein cargos into vesicles assembled at cell bodies for delivery into neurites and nerve terminals. The BLOC-1 complex, in association with SNARE proteins, is also proposed to be involved in neurite extension. Plays a role in intracellular vesicle trafficking. The chain is Biogenesis of lysosome-related organelles complex 1 subunit 5 from Homo sapiens (Human).